Reading from the N-terminus, the 219-residue chain is Octanoyltransferase (219 aa).

The BPL/LPL catalytic domain occupies 32–207; that stretch reads SSSPDQLWIV…TFSHNLGYQN (176 aa). Residues 71 to 78, 138 to 140, and 151 to 153 contribute to the substrate site; these read RGGQVTYH, SLG, and GLA. The Acyl-thioester intermediate role is filled by cysteine 169.

Belongs to the LipB family.

Its subcellular location is the cytoplasm. The enzyme catalyses octanoyl-[ACP] + L-lysyl-[protein] = N(6)-octanoyl-L-lysyl-[protein] + holo-[ACP] + H(+). It participates in protein modification; protein lipoylation via endogenous pathway; protein N(6)-(lipoyl)lysine from octanoyl-[acyl-carrier-protein]: step 1/2. Catalyzes the transfer of endogenously produced octanoic acid from octanoyl-acyl-carrier-protein onto the lipoyl domains of lipoate-dependent enzymes. Lipoyl-ACP can also act as a substrate although octanoyl-ACP is likely to be the physiological substrate. This chain is Octanoyltransferase, found in Shewanella woodyi (strain ATCC 51908 / MS32).